Reading from the N-terminus, the 180-residue chain is Trichosurin (180 aa).

A signal peptide spans 1 to 15 (MKLLLLSMGLALVCG). Residues N67 and N148 are each glycosylated (N-linked (GlcNAc...) asparagine). A disulfide bridge connects residues C87 and C180.

The protein belongs to the calycin superfamily. Lipocalin family. As to quaternary structure, homodimer. As to expression, milk.

Its subcellular location is the secreted. This is Trichosurin from Trichosurus vulpecula (Brush-tailed possum).